The primary structure comprises 348 residues: Protein RecA (348 aa).

Residue 64 to 71 coordinates ATP; sequence GPESSGKT. Positions 325–335 are enriched in basic and acidic residues; sequence YEIDGSNKEPL. Residues 325–348 are disordered; the sequence is YEIDGSNKEPLDEGEETLSLLDDE. Residues 336-348 show a composition bias toward acidic residues; sequence DEGEETLSLLDDE.

This sequence belongs to the RecA family.

It is found in the cytoplasm. Its function is as follows. Can catalyze the hydrolysis of ATP in the presence of single-stranded DNA, the ATP-dependent uptake of single-stranded DNA by duplex DNA, and the ATP-dependent hybridization of homologous single-stranded DNAs. It interacts with LexA causing its activation and leading to its autocatalytic cleavage. The protein is Protein RecA of Listeria monocytogenes serotype 4b (strain CLIP80459).